Consider the following 450-residue polypeptide: Glucose-6-phosphate isomerase (450 aa).

Catalysis depends on glutamate 290, which acts as the Proton donor. Residues histidine 311 and lysine 425 contribute to the active site.

This sequence belongs to the GPI family.

The protein localises to the cytoplasm. It carries out the reaction alpha-D-glucose 6-phosphate = beta-D-fructose 6-phosphate. It functions in the pathway carbohydrate biosynthesis; gluconeogenesis. Its pathway is carbohydrate degradation; glycolysis; D-glyceraldehyde 3-phosphate and glycerone phosphate from D-glucose: step 2/4. In terms of biological role, catalyzes the reversible isomerization of glucose-6-phosphate to fructose-6-phosphate. The sequence is that of Glucose-6-phosphate isomerase from Lactiplantibacillus plantarum (strain ATCC BAA-793 / NCIMB 8826 / WCFS1) (Lactobacillus plantarum).